Here is a 173-residue protein sequence, read N- to C-terminus: Crossover junction endodeoxyribonuclease RuvC (173 aa).

Residues aspartate 8, glutamate 67, and aspartate 139 contribute to the active site. 3 residues coordinate Mg(2+): aspartate 8, glutamate 67, and aspartate 139.

It belongs to the RuvC family. In terms of assembly, homodimer which binds Holliday junction (HJ) DNA. The HJ becomes 2-fold symmetrical on binding to RuvC with unstacked arms; it has a different conformation from HJ DNA in complex with RuvA. In the full resolvosome a probable DNA-RuvA(4)-RuvB(12)-RuvC(2) complex forms which resolves the HJ. Requires Mg(2+) as cofactor.

It localises to the cytoplasm. The enzyme catalyses Endonucleolytic cleavage at a junction such as a reciprocal single-stranded crossover between two homologous DNA duplexes (Holliday junction).. The RuvA-RuvB-RuvC complex processes Holliday junction (HJ) DNA during genetic recombination and DNA repair. Endonuclease that resolves HJ intermediates. Cleaves cruciform DNA by making single-stranded nicks across the HJ at symmetrical positions within the homologous arms, yielding a 5'-phosphate and a 3'-hydroxyl group; requires a central core of homology in the junction. The consensus cleavage sequence is 5'-(A/T)TT(C/G)-3'. Cleavage occurs on the 3'-side of the TT dinucleotide at the point of strand exchange. HJ branch migration catalyzed by RuvA-RuvB allows RuvC to scan DNA until it finds its consensus sequence, where it cleaves and resolves the cruciform DNA. This is Crossover junction endodeoxyribonuclease RuvC from Salmonella agona (strain SL483).